The following is an 85-amino-acid chain: Hepcidin (85 aa).

The signal sequence occupies residues 1–22 (MALSTRIQAACLLLLLLASVAS). A propeptide spanning residues 23–54 (VSVLPHQTGQLTDLRAQDTAGAEAGLQPTLQL) is cleaved from the precursor. 4 disulfide bridges follow: Cys67/Cys83, Cys70/Cys73, Cys71/Cys79, and Cys74/Cys82.

This sequence belongs to the hepcidin family. In terms of assembly, interacts with SLC40A1; this interaction promotes SLC40A1 rapid ubiquitination.

It localises to the secreted. Functionally, liver-produced hormone that constitutes the main circulating regulator of iron absorption and distribution across tissues. Acts by promoting endocytosis and degradation of ferroportin/SLC40A1, leading to the retention of iron in iron-exporting cells and decreased flow of iron into plasma. Controls the major flows of iron into plasma: absorption of dietary iron in the intestine, recycling of iron by macrophages, which phagocytose old erythrocytes and other cells, and mobilization of stored iron from hepatocytes. In terms of biological role, has strong antimicrobial activity against E.coli ML35P N.cinerea and weaker against S.epidermidis, S.aureus and group b streptococcus bacteria. Active against the fungus C.albicans. No activity against P.aeruginosa. This is Hepcidin (HAMP) from Canis lupus familiaris (Dog).